The following is a 287-amino-acid chain: Pyridoxal 5'-phosphate synthase subunit PdxS (287 aa).

Aspartate 21 provides a ligand contact to D-ribose 5-phosphate. The active-site Schiff-base intermediate with D-ribose 5-phosphate is lysine 78. Glycine 150 is a binding site for D-ribose 5-phosphate. D-glyceraldehyde 3-phosphate is bound at residue arginine 162. Residues glycine 211 and 232-233 contribute to the D-ribose 5-phosphate site; that span reads GS.

The protein belongs to the PdxS/SNZ family. In the presence of PdxT, forms a dodecamer of heterodimers.

The enzyme catalyses aldehydo-D-ribose 5-phosphate + D-glyceraldehyde 3-phosphate + L-glutamine = pyridoxal 5'-phosphate + L-glutamate + phosphate + 3 H2O + H(+). It participates in cofactor biosynthesis; pyridoxal 5'-phosphate biosynthesis. Its function is as follows. Catalyzes the formation of pyridoxal 5'-phosphate from ribose 5-phosphate (RBP), glyceraldehyde 3-phosphate (G3P) and ammonia. The ammonia is provided by the PdxT subunit. Can also use ribulose 5-phosphate and dihydroxyacetone phosphate as substrates, resulting from enzyme-catalyzed isomerization of RBP and G3P, respectively. The sequence is that of Pyridoxal 5'-phosphate synthase subunit PdxS from Francisella philomiragia subsp. philomiragia (strain ATCC 25017 / CCUG 19701 / FSC 153 / O#319-036).